We begin with the raw amino-acid sequence, 560 residues long: Solute carrier family 49 member A3 (560 aa).

12 consecutive transmembrane segments (helical) span residues 30 to 50 (WVFL…WLSF), 70 to 90 (WLSL…IWIL), 100 to 120 (ILGA…CMVV), 125 to 145 (PFAF…LVIF), 166 to 186 (LATM…PVLV), 192 to 212 (IPLM…LSTI), 250 to 270 (VILA…SALL), 282 to 302 (GFSG…ALAL), 318 to 338 (IGLC…QLQG), 341 to 361 (LALA…GPVA), 379 to 399 (GMIF…MTAL), and 422 to 442 (VSLL…AVFF). A disordered region spans residues 451-540 (AESGEPPSTR…PGRLAGRVQA (90 aa)). Residues 466-481 (ADSGPGVDRGGAGRAG) are compositionally biased toward gly residues.

Belongs to the major facilitator superfamily.

It localises to the membrane. This chain is Solute carrier family 49 member A3, found in Homo sapiens (Human).